The sequence spans 489 residues: Arginine biosynthesis bifunctional protein ArgJ 2, mitochondrial (489 aa).

The N-terminal 11 residues, 1 to 11 (MLLISRIGARH), are a transit peptide targeting the mitochondrion. Threonine 205, lysine 234, threonine 245, glutamate 341, and asparagine 484 together coordinate substrate. The active-site Nucleophile is threonine 245.

It belongs to the ArgJ family. Heterodimer of an alpha and a beta chain. The alpha and beta chains are autoproteolytically processed from a single precursor protein within the mitochondrion.

It localises to the mitochondrion matrix. It carries out the reaction N(2)-acetyl-L-ornithine + L-glutamate = N-acetyl-L-glutamate + L-ornithine. It catalyses the reaction L-glutamate + acetyl-CoA = N-acetyl-L-glutamate + CoA + H(+). It functions in the pathway amino-acid biosynthesis; L-arginine biosynthesis; L-ornithine and N-acetyl-L-glutamate from L-glutamate and N(2)-acetyl-L-ornithine (cyclic): step 1/1. The protein operates within amino-acid biosynthesis; L-arginine biosynthesis; N(2)-acetyl-L-ornithine from L-glutamate: step 1/4. Its function is as follows. Catalyzes two activities which are involved in the cyclic version of arginine biosynthesis: the synthesis of acetylglutamate from glutamate and acetyl-CoA, and of ornithine by transacetylation between acetylornithine and glutamate. This Sclerotinia sclerotiorum (strain ATCC 18683 / 1980 / Ss-1) (White mold) protein is Arginine biosynthesis bifunctional protein ArgJ 2, mitochondrial.